A 201-amino-acid polypeptide reads, in one-letter code: Glycerol-3-phosphate acyltransferase (201 aa).

5 helical membrane passes run 5–25 (LLGA…FGVV), 55–75 (KMGV…ILVA), 88–108 (WVTA…WLGF), 118–138 (LGIF…GYAV), and 164–184 (TYGP…LIFL).

Belongs to the PlsY family. As to quaternary structure, probably interacts with PlsX.

The protein localises to the cell inner membrane. The enzyme catalyses an acyl phosphate + sn-glycerol 3-phosphate = a 1-acyl-sn-glycero-3-phosphate + phosphate. It functions in the pathway lipid metabolism; phospholipid metabolism. In terms of biological role, catalyzes the transfer of an acyl group from acyl-phosphate (acyl-PO(4)) to glycerol-3-phosphate (G3P) to form lysophosphatidic acid (LPA). This enzyme utilizes acyl-phosphate as fatty acyl donor, but not acyl-CoA or acyl-ACP. This chain is Glycerol-3-phosphate acyltransferase, found in Anaeromyxobacter sp. (strain K).